A 446-amino-acid polypeptide reads, in one-letter code: Exodeoxyribonuclease 7 large subunit (446 aa).

Belongs to the XseA family. Heterooligomer composed of large and small subunits.

The protein resides in the cytoplasm. It catalyses the reaction Exonucleolytic cleavage in either 5'- to 3'- or 3'- to 5'-direction to yield nucleoside 5'-phosphates.. Functionally, bidirectionally degrades single-stranded DNA into large acid-insoluble oligonucleotides, which are then degraded further into small acid-soluble oligonucleotides. This chain is Exodeoxyribonuclease 7 large subunit, found in Streptococcus equi subsp. zooepidemicus (strain MGCS10565).